Here is a 472-residue protein sequence, read N- to C-terminus: uncharacterized protein (472 aa).

6 helical membrane-spanning segments follow: residues 4 to 24, 27 to 47, 56 to 76, 99 to 119, 140 to 160, and 176 to 196; these read IIIL…FSVI, APIC…LPFF, AGFI…GKVV, ILAI…LFVV, LIPG…LPGT, and IYAA…AGML. The tract at residues 209 to 229 is disordered; that stretch reads GEGYGGFDSQNAPAPESIESA. Low complexity predominate over residues 220–229; it reads APAPESIESA. 5 consecutive transmembrane segments (helical) span residues 240–260, 286–306, 323–343, 372–392, and 448–468; these read ALAF…TIYL, AAAI…TILF, IGGA…GGII, TALA…LSAM, and IFAI…IYSL.

Belongs to the CitM (TC 2.A.11) transporter family.

Its subcellular location is the cell membrane. This is an uncharacterized protein from Bacillus subtilis (strain 168).